Reading from the N-terminus, the 488-residue chain is Dihydrolipoyl dehydrogenase, mitochondrial (488 aa).

Residues 1 to 25 (MLRINRISNLRTFGQRFFSTEQQDV) constitute a mitochondrion transit peptide. FAD is bound by residues 52 to 61 (EKRGKLGGTC), Lys70, Gly134, and 163 to 165 (TGS). A disulfide bridge links Cys61 with Cys66. NAD(+)-binding positions include 200–207 (GGGVIGLE), Glu223, Val257, and Gly294. Residues Asp335 and 341–344 (MLAH) contribute to the FAD site. The active-site Proton acceptor is the His467.

It belongs to the class-I pyridine nucleotide-disulfide oxidoreductase family. Requires FAD as cofactor.

The protein resides in the mitochondrion matrix. The catalysed reaction is N(6)-[(R)-dihydrolipoyl]-L-lysyl-[protein] + NAD(+) = N(6)-[(R)-lipoyl]-L-lysyl-[protein] + NADH + H(+). This chain is Dihydrolipoyl dehydrogenase, mitochondrial (lpd), found in Dictyostelium discoideum (Social amoeba).